We begin with the raw amino-acid sequence, 186 residues long: ATP synthase subunit delta, chloroplastic (186 aa).

Belongs to the ATPase delta chain family. In terms of assembly, F-type ATPases have 2 components, F(1) - the catalytic core - and F(0) - the membrane proton channel. F(1) has five subunits: alpha(3), beta(3), gamma(1), delta(1), epsilon(1). CF(0) has four main subunits: a(1), b(1), b'(1) and c(10-14). The alpha and beta chains form an alternating ring which encloses part of the gamma chain. F(1) is attached to F(0) by a central stalk formed by the gamma and epsilon chains, while a peripheral stalk is formed by the delta, b and b' chains.

The protein resides in the plastid. Its subcellular location is the chloroplast thylakoid membrane. F(1)F(0) ATP synthase produces ATP from ADP in the presence of a proton or sodium gradient. F-type ATPases consist of two structural domains, F(1) containing the extramembraneous catalytic core and F(0) containing the membrane proton channel, linked together by a central stalk and a peripheral stalk. During catalysis, ATP synthesis in the catalytic domain of F(1) is coupled via a rotary mechanism of the central stalk subunits to proton translocation. Functionally, this protein is part of the stalk that links CF(0) to CF(1). It either transmits conformational changes from CF(0) to CF(1) or is implicated in proton conduction. The protein is ATP synthase subunit delta, chloroplastic of Porphyra purpurea (Red seaweed).